A 235-amino-acid polypeptide reads, in one-letter code: Phosphoribosylaminoimidazole-succinocarboxamide synthase (235 aa).

This sequence belongs to the SAICAR synthetase family.

The catalysed reaction is 5-amino-1-(5-phospho-D-ribosyl)imidazole-4-carboxylate + L-aspartate + ATP = (2S)-2-[5-amino-1-(5-phospho-beta-D-ribosyl)imidazole-4-carboxamido]succinate + ADP + phosphate + 2 H(+). It functions in the pathway purine metabolism; IMP biosynthesis via de novo pathway; 5-amino-1-(5-phospho-D-ribosyl)imidazole-4-carboxamide from 5-amino-1-(5-phospho-D-ribosyl)imidazole-4-carboxylate: step 1/2. In Nautilia profundicola (strain ATCC BAA-1463 / DSM 18972 / AmH), this protein is Phosphoribosylaminoimidazole-succinocarboxamide synthase.